We begin with the raw amino-acid sequence, 620 residues long: Cilia- and flagella-associated protein 52 (620 aa).

11 WD repeats span residues 62–106 (GHGN…LLAR), 109–150 (LHKG…AICG), 156–195 (LNVG…RKIW), 288–327 (QLQG…ETLI), 330–369 (CHFD…ELLR), 372–411 (VPNM…LMYV), 415–454 (AHRI…QKLE), 459–498 (EHKS…RNQM), 500–539 (LANT…VIRE), 543–582 (SLSG…VTHV), and 585–620 (GHSG…PYTS).

This sequence belongs to the CFAP52 family. As to quaternary structure, microtubule inner protein component of sperm flagellar doublet microtubules. Interacts with BRCA2. Interacts with the CCT chaperonin complex. Interacts with HSP70. Interacts with AK8. Interacts with CFAP45. Interacts with DNAI1. Interacts with IQDC. Expressed in respiratory cells and sperm (at protein level). Highly expressed in testis. Up-regulated in hepatocellular carcinoma (HCC).

It localises to the cytoplasm. It is found in the cytoskeleton. The protein resides in the cilium axoneme. The protein localises to the flagellum axoneme. Microtubule inner protein (MIP) part of the dynein-decorated doublet microtubules (DMTs) in cilia axoneme. Important for proper ciliary and flagellar beating. May act in cooperation with CFAP45 and axonemal dynein subunit DNAH11. May play a role in cell growth and/or survival. This chain is Cilia- and flagella-associated protein 52, found in Homo sapiens (Human).